Here is a 90-residue protein sequence, read N- to C-terminus: Chaplin-G (90 aa).

Residues 1-27 (MSRIAKAAGVALGTGAVVLSGTGMAMA) form the signal peptide. A Chaplin domain is found at 38 to 78 (SPGVLSGNVVQVPVHVPVNLCGNTIDVIGLLNPAFGNACEN). The cysteines at positions 58 and 76 are disulfide-linked.

It belongs to the chaplin family. Short chaplin subfamily.

The protein localises to the cell surface. Its subcellular location is the secreted. The protein resides in the cell wall. In terms of biological role, one of 8 partially redundant surface-active proteins required for efficient formation of aerial mycelium; the short chaplins assemble into a hydrophobic, amyloidal fibrillar surface layer that envelopes and protects aerial hyphae and spores, presumably anchored to the long chaplins. Chaplins have an overlapping function with the surface-active SapB peptide; chaplins are essential on minimal medium while on rich medium both chaplins and SapB are required for efficient aerial hyphae formation. Chaplins are also involved in cell attachment to a hydrophobic surface. Forms amyloid fibrils in vitro probably composed of stacked beta-sheets, at low extracellular concentrations individually restores the ability to form aerial hyphae to a chaplin-deficient strain. A small chaplin extract (ChpD, ChpE, ChpF, ChpG and ChpH) self-assembles into 2 different amyloids; small fibrils at the air-water interface form an amphipathic membrane that resembles spore-surface structures involved in aerial hyphae formation, and hydrophilic fibrils in solution that resemble the fibers that attach cells to a hydrophobic surface. At the air-water interface the hydrophilic surface is in contact with water (probably equivalent to the peptidoglycan layer), while the hydrophobic face is exposed to the air, making the surface of the aerial hyphae hydrophobic. A small chaplin extract applied to a chaplin-deficient strain restores aerial hyphae formation. The small chaplin extract forms an amyloid-like structure similar to that seen on the surface of cells without rodlets (rdlA-rdlB deletions), and is highly surface active, reducing surface tension from 72 to 26 mJ/m(2), which probably allows escape of hyphae from an aqueous environment into air. ChpF and ChpG are sufficient to restore the rodlet layer and hydrophobicity to a strain deleted for the other 6 chaplin genes. The sequence is that of Chaplin-G from Streptomyces coelicolor (strain ATCC BAA-471 / A3(2) / M145).